A 136-amino-acid chain; its full sequence is Nucleoside diphosphate kinase (136 aa).

ATP contacts are provided by lysine 10, phenylalanine 58, arginine 86, threonine 92, arginine 104, and asparagine 114. The active-site Pros-phosphohistidine intermediate is histidine 117.

It belongs to the NDK family. In terms of assembly, homohexamer. Requires Mg(2+) as cofactor.

It is found in the cytoplasm. It catalyses the reaction a 2'-deoxyribonucleoside 5'-diphosphate + ATP = a 2'-deoxyribonucleoside 5'-triphosphate + ADP. It carries out the reaction a ribonucleoside 5'-diphosphate + ATP = a ribonucleoside 5'-triphosphate + ADP. Functionally, major role in the synthesis of nucleoside triphosphates other than ATP. The ATP gamma phosphate is transferred to the NDP beta phosphate via a ping-pong mechanism, using a phosphorylated active-site intermediate. This is Nucleoside diphosphate kinase from Mycobacterium bovis (strain ATCC BAA-935 / AF2122/97).